The primary structure comprises 35 residues: Augerpeptide hheTx4 (35 aa).

In terms of processing, contains 4 disulfide bonds. Expressed by the venom duct.

The protein localises to the secreted. The protein is Augerpeptide hheTx4 of Hastula hectica (Sea snail).